A 696-amino-acid polypeptide reads, in one-letter code: Polyphosphate kinase (696 aa).

Asparagine 45 serves as a coordination point for ATP. Mg(2+) is bound by residues arginine 373 and arginine 403. Positions 428–462 (PGLKIHSKLLMISRREGDDIIRYAHIGTGNFHEKT) constitute a PLD phosphodiesterase domain. Histidine 433 acts as the Phosphohistidine intermediate in catalysis. 3 residues coordinate ATP: tyrosine 466, arginine 562, and histidine 590.

The protein belongs to the polyphosphate kinase 1 (PPK1) family. Requires Mg(2+) as cofactor. In terms of processing, an intermediate of this reaction is the autophosphorylated ppk in which a phosphate is covalently linked to a histidine residue through a N-P bond.

It catalyses the reaction [phosphate](n) + ATP = [phosphate](n+1) + ADP. Catalyzes the reversible transfer of the terminal phosphate of ATP to form a long-chain polyphosphate (polyP). The chain is Polyphosphate kinase from Vibrio parahaemolyticus serotype O3:K6 (strain RIMD 2210633).